The primary structure comprises 412 residues: Argininosuccinate synthase (412 aa).

Residues 10–18 (AYSGGLDTS) and A36 contribute to the ATP site. Residues Y87 and S92 each coordinate L-citrulline. Y87 bears the Phosphotyrosine mark. At K112 the chain carries N6-acetyllysine. Phosphotyrosine is present on Y113. Residue 115-123 (SHGATGKGN) participates in ATP binding. Residues T119, N123, and D124 each contribute to the L-aspartate site. N123 provides a ligand contact to L-citrulline. R127 is an L-citrulline binding site. An N6-acetyllysine; by CLOCK mark is found at K165 and K176. L-citrulline-binding residues include S180 and S189. S180 is subject to Phosphoserine. S219 carries the phosphoserine modification. L-citrulline is bound by residues E270 and Y282.

This sequence belongs to the argininosuccinate synthase family. Type 1 subfamily. In terms of assembly, homotetramer. Interacts with NMRAL1. Interacts with CLOCK; in a circadian manner. Forms tissue-specific complexes with ASL, SLC7A1, HSP90AA1 and nitric oxide synthase NOS1, NOS2 or NOS3; the complex regulates cell-autonomous L-arginine synthesis and citrulline recycling while channeling extracellular L-arginine to nitric oxide synthesis pathway. Acetylated by CLOCK in a circadian manner which negatively regulates its enzyme activity. Deacetylated by histone deacetylases.

It is found in the cytoplasm. The protein resides in the cytosol. The catalysed reaction is L-citrulline + L-aspartate + ATP = 2-(N(omega)-L-arginino)succinate + AMP + diphosphate + H(+). Its pathway is amino-acid biosynthesis; L-arginine biosynthesis; L-arginine from L-ornithine and carbamoyl phosphate: step 2/3. It functions in the pathway nitrogen metabolism; urea cycle; (N(omega)-L-arginino)succinate from L-aspartate and L-citrulline: step 1/1. Functionally, one of the enzymes of the urea cycle, the metabolic pathway transforming neurotoxic amonia produced by protein catabolism into inocuous urea in the liver of ureotelic animals. Catalyzes the formation of arginosuccinate from aspartate, citrulline and ATP and together with ASL it is responsible for the biosynthesis of arginine in most body tissues. This Bos taurus (Bovine) protein is Argininosuccinate synthase.